The primary structure comprises 301 residues: Ribonuclease Z (301 aa).

Residues His-60, His-62, Asp-64, His-65, His-137, Asp-207, and His-265 each coordinate Zn(2+). Asp-64 functions as the Proton acceptor in the catalytic mechanism.

This sequence belongs to the RNase Z family. Homodimer. The cofactor is Zn(2+).

It catalyses the reaction Endonucleolytic cleavage of RNA, removing extra 3' nucleotides from tRNA precursor, generating 3' termini of tRNAs. A 3'-hydroxy group is left at the tRNA terminus and a 5'-phosphoryl group is left at the trailer molecule.. Its function is as follows. Zinc phosphodiesterase, which displays some tRNA 3'-processing endonuclease activity. Probably involved in tRNA maturation, by removing a 3'-trailer from precursor tRNA. This is Ribonuclease Z from Exiguobacterium sp. (strain ATCC BAA-1283 / AT1b).